Here is a 275-residue protein sequence, read N- to C-terminus: NH(3)-dependent NAD(+) synthetase (275 aa).

50–57 contacts ATP; sequence GISGGVDS. Asp56 serves as a coordination point for Mg(2+). Arg147 is a binding site for deamido-NAD(+). Thr167 serves as a coordination point for ATP. Glu172 is a binding site for Mg(2+). Lys180 and Asp187 together coordinate deamido-NAD(+). Positions 196 and 218 each coordinate ATP. 267-268 contacts deamido-NAD(+); the sequence is HK.

This sequence belongs to the NAD synthetase family. Homodimer.

It carries out the reaction deamido-NAD(+) + NH4(+) + ATP = AMP + diphosphate + NAD(+) + H(+). Its pathway is cofactor biosynthesis; NAD(+) biosynthesis; NAD(+) from deamido-NAD(+) (ammonia route): step 1/1. Its function is as follows. Catalyzes the ATP-dependent amidation of deamido-NAD to form NAD. Uses ammonia as a nitrogen source. The protein is NH(3)-dependent NAD(+) synthetase of Pseudomonas entomophila (strain L48).